The primary structure comprises 146 residues: Ribonuclease H (146 aa).

The RNase H type-1 domain occupies 1–143 (MKKRVTIYTD…CDELARQAIK (143 aa)). Mg(2+) contacts are provided by D10, E48, D70, and D135.

This sequence belongs to the RNase H family. Monomer. The cofactor is Mg(2+).

It localises to the cytoplasm. It carries out the reaction Endonucleolytic cleavage to 5'-phosphomonoester.. Functionally, endonuclease that specifically degrades the RNA of RNA-DNA hybrids. In Chlorobium limicola (strain DSM 245 / NBRC 103803 / 6330), this protein is Ribonuclease H.